The following is a 645-amino-acid chain: Cysteine-rich receptor-like protein kinase 19 (645 aa).

A signal peptide spans 1 to 20 (MSSLISFIFLFLFSSITASA). Over 21-262 (QNTFYLYHNC…PRPGKGGNSS (242 aa)) the chain is Extracellular. Gnk2-homologous domains lie at 24-129 (FYLY…NRNI) and 135-239 (TDGG…NYAF). N-linked (GlcNAc...) asparagine glycans are attached at residues Asn29, Asn39, Asn57, Asn101, Asn185, Asn241, and Asn260. Residues 263–283 (VIIIAVVVPITVLFLLLVAVF) form a helical membrane-spanning segment. Residues 284–645 (SVRAKNKRTL…EASITRVTPR (362 aa)) lie on the Cytoplasmic side of the membrane. In terms of domain architecture, Protein kinase spans 326 to 603 (FLPINKLGQG…IVQMLTTSLI (278 aa)). Residues 332–340 (LGQGGFGEV) and Lys354 each bind ATP. Tyr399 carries the post-translational modification Phosphotyrosine. Asp451 acts as the Proton acceptor in catalysis. The residue at position 491 (Thr491) is a Phosphothreonine. At Tyr499 the chain carries Phosphotyrosine. The disordered stretch occupies residues 616-645 (RSKQEQAGPSIDSSTHCSVDEASITRVTPR). A compositionally biased stretch (polar residues) spans 620–632 (EQAGPSIDSSTHC).

This sequence belongs to the protein kinase superfamily. Ser/Thr protein kinase family. CRK subfamily. In terms of assembly, interacts with MWL1.

It localises to the membrane. The enzyme catalyses L-seryl-[protein] + ATP = O-phospho-L-seryl-[protein] + ADP + H(+). It carries out the reaction L-threonyl-[protein] + ATP = O-phospho-L-threonyl-[protein] + ADP + H(+). The sequence is that of Cysteine-rich receptor-like protein kinase 19 (CRK19) from Arabidopsis thaliana (Mouse-ear cress).